A 501-amino-acid polypeptide reads, in one-letter code: ATP synthase subunit alpha (501 aa).

Residue 169 to 176 participates in ATP binding; it reads GDRQTGKT.

This sequence belongs to the ATPase alpha/beta chains family. In terms of assembly, F-type ATPases have 2 components, CF(1) - the catalytic core - and CF(0) - the membrane proton channel. CF(1) has five subunits: alpha(3), beta(3), gamma(1), delta(1), epsilon(1). CF(0) has three main subunits: a(1), b(2) and c(9-12). The alpha and beta chains form an alternating ring which encloses part of the gamma chain. CF(1) is attached to CF(0) by a central stalk formed by the gamma and epsilon chains, while a peripheral stalk is formed by the delta and b chains.

It localises to the cell inner membrane. It carries out the reaction ATP + H2O + 4 H(+)(in) = ADP + phosphate + 5 H(+)(out). Its function is as follows. Produces ATP from ADP in the presence of a proton gradient across the membrane. The alpha chain is a regulatory subunit. This is ATP synthase subunit alpha from Campylobacter jejuni subsp. doylei (strain ATCC BAA-1458 / RM4099 / 269.97).